Here is a 504-residue protein sequence, read N- to C-terminus: Lysine--tRNA ligase (504 aa).

Positions 404 and 411 each coordinate Mg(2+).

The protein belongs to the class-II aminoacyl-tRNA synthetase family. Homodimer. It depends on Mg(2+) as a cofactor.

The protein localises to the cytoplasm. It catalyses the reaction tRNA(Lys) + L-lysine + ATP = L-lysyl-tRNA(Lys) + AMP + diphosphate. The protein is Lysine--tRNA ligase of Aliarcobacter butzleri (strain RM4018) (Arcobacter butzleri).